A 73-amino-acid chain; its full sequence is Large ribosomal subunit protein bL31 (73 aa).

The protein belongs to the bacterial ribosomal protein bL31 family. Type A subfamily. In terms of assembly, part of the 50S ribosomal subunit.

Its function is as follows. Binds the 23S rRNA. This is Large ribosomal subunit protein bL31 from Rhizobium johnstonii (strain DSM 114642 / LMG 32736 / 3841) (Rhizobium leguminosarum bv. viciae).